Consider the following 170-residue polypeptide: Ubiquitin-conjugating enzyme E2 G1 (170 aa).

N-acetylmethionine is present on methionine 1. Threonine 2 carries the N-acetylthreonine; in Ubiquitin-conjugating enzyme E2 G1, N-terminally processed modification. Residues 5-166 (QSALLLRRQL…VARCVRKSQE (162 aa)) enclose the UBC core domain. Catalysis depends on cysteine 90, which acts as the Glycyl thioester intermediate.

The protein belongs to the ubiquitin-conjugating enzyme family. Post-translationally, autoubiquitinated.

It carries out the reaction S-ubiquitinyl-[E1 ubiquitin-activating enzyme]-L-cysteine + [E2 ubiquitin-conjugating enzyme]-L-cysteine = [E1 ubiquitin-activating enzyme]-L-cysteine + S-ubiquitinyl-[E2 ubiquitin-conjugating enzyme]-L-cysteine.. It participates in protein modification; protein ubiquitination. Accepts ubiquitin from the E1 complex and catalyzes its covalent attachment to other proteins. In vitro catalyzes 'Lys-48'-, as well as 'Lys-63'-linked polyubiquitination. May be involved in degradation of muscle-specific proteins. Mediates polyubiquitination of CYP3A4. The chain is Ubiquitin-conjugating enzyme E2 G1 (UBE2G1) from Macaca fascicularis (Crab-eating macaque).